We begin with the raw amino-acid sequence, 430 residues long: MSSIVAIKGFNDVLPTQTAAWRRLEQHLASLMDAYGYQQIRLPIVEQTGLFKRAIGDATDIVEKEMYTFFDKGNPPESLTLRPEGTAGCVRALVEHNLLRGATPRVWYMGPMFRYEKPQKGRYRQFHQFGVETFGVATPDIEAEVILMTARLWKRMGVAHMVQLELNTLGEKEERTEYRNALVAFLNEHKDALDEDSQRRLTTNPLRILDSKIESTQKILENAPKLYDFLKEDSLSHFQQLQDYLTAAGIKFVINQKLVRGLDYYNKTVFEWTTTALGSQGTVCGGGRYDGLVGQLKGKADQSVPAVGFGMGMERLLLLIEQVEQAEIVRDCEAFLVAEPAYQSKALVLAEQLRDQLEAANSNIRIKTGSQGSMKSQMKKADQAGAVYAIILGEREWEAQQLAVKELATAEQSQVALAELVPFLIEKFTK.

This sequence belongs to the class-II aminoacyl-tRNA synthetase family. In terms of assembly, homodimer.

It is found in the cytoplasm. The enzyme catalyses tRNA(His) + L-histidine + ATP = L-histidyl-tRNA(His) + AMP + diphosphate + H(+). This Acinetobacter baumannii (strain ACICU) protein is Histidine--tRNA ligase.